We begin with the raw amino-acid sequence, 752 residues long: MAANPEDFSGWLEGNVAAARRHRGAEEEEGEAAEQGRTIKAQQAGHQPVAMEMTSTDSTNIFHLHDRESKDHDDGLSYTYLSSDKHYISHPDSTYFTGISKKETESLDKKEFSGAGPHSPKEIPTFDSRGLFSSDSGIEMTPAEWSDVNRSLADPIEEEKLEACKYIDIRRSPDMKSQQVVDAGFGANRSNTISQAAPTEQQTYDSVTMSWQKDHYNGNISEYLPYMEEPREDFGLYHSPTSKEPKSAPVTITFTGMETALQTEYPGNQQGKSNKGLRPSPDLVPTVTVSEPEEDSPESLTPPSTDADGYAEPCGSEKQREYGICEDELISAIKAKEGTKRFSSETNDEKQSRSFHAEKQDFTVMSTEATSASHYTKASSAESGDSEIELVSEDQVGAEEAMQSAYMTFSHISGPPPSPASPSIQYSILREEREAELDSELIIESCDGSSASEESPKRDPDSPMMKPMIMDIIEEENLSRTESFEASDFESCSLKEKKLNMENLAESASYLKGKFPAEIRADMPSTKKEEFLPQKKSPEGPAYQSKVIGMTSILGPKPLTFFKKKAIDLLYWRDVKQTGIVFGSILLMLFSLTLFSVVSVIAYLALAALSATISFRIYKSVLQAVQKTDEGHPFKSYLDIEISLSQEQIQKYTGCFQLYTNSIAKELRRLFLVQDLVDSLKFAVLMWLLTYVGALFNGLTLLIMAVVSMFSLPVVYDKYQAQIDQYLGLVRTNMNIIVTKIQAKIPGTKQKE.

Disordered stretches follow at residues Met1–Asp57, Glu264–Gln319, Lys334–Ile424, and Glu444–Met465. Residues Glu264–Ser273 are compositionally biased toward polar residues. The segment covering Lys334 to Asp361 has biased composition (basic and acidic residues). A compositionally biased stretch (polar residues) spans Thr363–Ser383. Residues Ala566 to Glu752 enclose the Reticulon domain. Helical transmembrane passes span Ile580–Val600 and Val684–Met704.

In terms of tissue distribution, isoform A and isoform C are both expressed in the animal hemisphere (presumptive neural ectoderm) of blastula and gastrula stage embryos, and along the anterior neural border, in the panplacodal primordium, and in the dorsolateral side of archenteron roof of late neurula embryos. At the tailbud stage, expression of the isoforms begin to differ. Isoform A localizes to the cranial placodes including the trigeminal placode, lateral line placode, olfactory placode and otic vesicle. Isoform C localizes to the central nervous system, including the spinal cord, prosencephalon, mesencephalon and rhombencephalon, as well as the lateral line placode, otic vesicle and pronephros.

It is found in the endoplasmic reticulum membrane. The protein localises to the nucleus. Inhibits amyloid precursor protein processing, probably by blocking BACE1 activity. In Xenopus laevis (African clawed frog), this protein is Reticulon-1-B (rtn1-b).